The following is a 396-amino-acid chain: KiSS-1 receptor (396 aa).

At 1 to 46 the chain is on the extracellular side; that stretch reads MAAEATLGPNVSWWAPSNASGCPGCGVNASDGPGSAPRPLDAWLVP. 3 N-linked (GlcNAc...) asparagine glycosylation sites follow: N10, N18, and N28. The chain crosses the membrane as a helical span at residues 47–67; the sequence is LFFAALMLLGLVGNSLVIFVI. At 68-90 the chain is on the cytoplasmic side; it reads CRHKHMQTVTNFYIANLAATDVT. The helical transmembrane segment at 91–111 threads the bilayer; the sequence is FLLCCVPFTALLYPLPTWVLG. Residues 112-120 are Extracellular-facing; that stretch reads DFMCKFVNY. Cysteines 115 and 191 form a disulfide. The helical transmembrane segment at 121-138 threads the bilayer; the sequence is IQQVSVQATCATLTAMSV. The Cytoplasmic portion of the chain corresponds to 139 to 159; the sequence is DRWYVTVFPLRALHRRTPRLA. A helical transmembrane segment spans residues 160 to 180; sequence LTVSLSIWVGSAAVSAPVLAL. Topologically, residues 181-202 are extracellular; the sequence is HRLSPGPHTYCSEAFPSRALER. The chain crosses the membrane as a helical span at residues 203 to 223; sequence AFALYNLLALYLLPLLATCAC. At 224-264 the chain is on the cytoplasmic side; it reads YGAMLRHLGRAAVRPAPTDGALQGQLLAQRAGAVRTKVSRL. The chain crosses the membrane as a helical span at residues 265–285; it reads VAAVVLLFAACWGPIQLFLVL. The Extracellular segment spans residues 286 to 305; sequence QALGPSGAWHPRSYAAYALK. A helical membrane pass occupies residues 306-326; it reads IWAHCMSYSNSALNPLLYAFL. At 327–396 the chain is on the cytoplasmic side; it reads GSHFRQAFCR…SVQDEHTAPL (70 aa). The tract at residues 346-396 is disordered; that stretch reads RRPHASAHSDRAAPHSVPHSRAAHPVRVRTPEPGNPVRRSPSVQDEHTAPL.

The protein belongs to the G-protein coupled receptor 1 family. In terms of tissue distribution, highest expression levels in the cerebrum and cecum. Moderate expression in the ovary, colon and placenta. Low levels in the uterus, small intestine, and thymus. Expressed only moderately in the placenta. No expression in kidney tissues. Has a complex and abundant central nervous system expression pattern. Expressed in brain regions such as pons, midbrain, thalamus, hypothalamus, hippocampus, amygdala, cortex, frontal cortex, and striatum. No expression in the cerebellum. Persistent expression is detected in hypothalamus throughout postnatal development, with maximum expression levels at puberty in both male and female. Hypothalamic expression changed throughout the estrus cycle and is significantly increased after gonadectomy, a rise that is prevented by sex steroid replacement both in males and females.

The protein resides in the cell membrane. Receptor for metastin, a C-terminally amidated peptide of KiSS1. KiSS1 is a metastasis suppressor protein. Activation of the receptor inhibits cell proliferation and cell migration, key characteristics of tumor metastasis. The receptor is essential for normal gonadotropin-released hormone physiology and for puberty. The hypothalamic KiSS1/KISS1R system is a pivotal factor in central regulation of the gonadotropic axis at puberty and in adulthood. Analysis of the transduction pathways activated by the receptor identifies coupling to phospholipase C and intracellular calcium release through pertussis toxin-insensitive G(q) proteins. This chain is KiSS-1 receptor (Kiss1r), found in Rattus norvegicus (Rat).